The primary structure comprises 223 residues: Thiopurine S-methyltransferase (223 aa).

Trp10, Leu45, Glu66, and Arg127 together coordinate S-adenosyl-L-methionine.

This sequence belongs to the class I-like SAM-binding methyltransferase superfamily. TPMT family.

Its subcellular location is the cytoplasm. The enzyme catalyses S-adenosyl-L-methionine + a thiopurine = S-adenosyl-L-homocysteine + a thiopurine S-methylether.. The polypeptide is Thiopurine S-methyltransferase (Shewanella woodyi (strain ATCC 51908 / MS32)).